Reading from the N-terminus, the 256-residue chain is Kallikrein 1-related peptidase-like b4 (256 aa).

Residues 1-17 (MWFLILFLALSLGGIDA) form the signal peptide. The interval 18-24 (APPVQSQ) is activation peptide homolog. Residues 18–253 (APPVQSQVDC…FSSWIRETMA (236 aa)) form the Peptidase S1 domain. A disulfide bridge connects residues C45 and C61. Zn(2+)-binding residues include E77 and H84. 3 disulfide bridges follow: C147–C214, C179–C193, and C204–C229.

This sequence belongs to the peptidase S1 family. Kallikrein subfamily. In terms of assembly, 7S nerve growth factor is composed of two alpha chains, a beta dimer composed of identical chains, and two gamma chains. It depends on Zn(2+) as a cofactor. In terms of processing, the presence of Gln-24 prevents cleavage of the activation peptide, which remains attached at the amino end of the mature alpha chain.

The polypeptide is Kallikrein 1-related peptidase-like b4 (Klk1b4) (Mus musculus (Mouse)).